The chain runs to 234 residues: Protein SSP120 (234 aa).

Positions 1 to 22 are cleaved as a signal peptide; the sequence is MRFLRGFVFSLAFTLYKVTATA. EF-hand domains follow at residues 52-87 and 108-143; these read LKDYTPETFFALHDIKKKGFLDENDILSLYGLNREE and MAKRVVSLIMRLLDVDDNTKITKEEYLQFAKRGNKF. At Thr212 the chain carries Phosphothreonine.

The protein is Protein SSP120 (SSP120) of Saccharomyces cerevisiae (strain ATCC 204508 / S288c) (Baker's yeast).